A 757-amino-acid chain; its full sequence is RNA exonuclease 3 (757 aa).

2 disordered regions span residues 56–259 (VKRE…AEHL) and 474–590 (ESLD…CDQA). Residues 120 to 132 (EGGRAEGAEKKEF) are compositionally biased toward basic and acidic residues. Composition is skewed to polar residues over residues 145-172 (TPHA…SSVS), 202-223 (QPSS…SSPK), and 230-240 (MTTSASPSQSR). Low complexity-rich tracts occupy residues 244-253 (RNTSASPSSS) and 474-502 (ESLD…KTAS). Over residues 503 to 516 (RPASTPTKSLTSSL) the composition is skewed to polar residues. 2 stretches are compositionally biased toward basic and acidic residues: residues 543 to 557 (REPD…RGIG) and 565 to 581 (SQER…RVRE). The Exonuclease domain occupies 597–751 (VVAVDCEMLY…EDALAALDVV (155 aa)).

It belongs to the REXO1/REXO3 family.

It localises to the cytoplasm. It is found in the nucleus. Functionally, 3' to 5' exoribonuclease required for proper 3' end maturation of MRP RNA and of the U5L snRNA. In Yarrowia lipolytica (strain CLIB 122 / E 150) (Yeast), this protein is RNA exonuclease 3 (REX3).